The chain runs to 326 residues: AA9 family lytic polysaccharide monooxygenase B (326 aa).

An N-terminal signal peptide occupies residues 1-19 (MKSFTIAALAALWAQEAAA). His-20 and His-98 together coordinate Cu(2+). A disulfide bridge links Cys-57 with Cys-192. Residues His-178 and Gln-187 each contribute to the O2 site. Tyr-189 is a Cu(2+) binding site. Residues 265-281 (PSATLTQPTSTATATSA) are compositionally biased toward low complexity. A disordered region spans residues 265–286 (PSATLTQPTSTATATSAPGGGG). Residues 289–326 (CTAAKYQQCGGTGYTGCTTCASGSTCSAVSPPYYSQCL) enclose the CBM1 domain.

The protein belongs to the polysaccharide monooxygenase AA9 family. Cu(2+) is required as a cofactor.

Its subcellular location is the secreted. The catalysed reaction is [(1-&gt;4)-beta-D-glucosyl]n+m + reduced acceptor + O2 = 4-dehydro-beta-D-glucosyl-[(1-&gt;4)-beta-D-glucosyl]n-1 + [(1-&gt;4)-beta-D-glucosyl]m + acceptor + H2O.. In terms of biological role, lytic polysaccharide monooxygenase (LPMO) that depolymerizes crystalline and amorphous polysaccharides via the oxidation of scissile alpha- or beta-(1-4)-glycosidic bonds, yielding C1 and C4 oxidation products. Catalysis by LPMOs requires the reduction of the active-site copper from Cu(II) to Cu(I) by a reducing agent and H(2)O(2) or O(2) as a cosubstrate. Shows no activity on wheat arabinoxylan, konjac glucomannan, acetylated spruce galactoglucomannan, or cellopentaose. This Thermothielavioides terrestris (strain ATCC 38088 / NRRL 8126) (Thielavia terrestris) protein is AA9 family lytic polysaccharide monooxygenase B.